The chain runs to 237 residues: Phosphoribosylaminoimidazole-succinocarboxamide synthase (237 aa).

Belongs to the SAICAR synthetase family.

The enzyme catalyses 5-amino-1-(5-phospho-D-ribosyl)imidazole-4-carboxylate + L-aspartate + ATP = (2S)-2-[5-amino-1-(5-phospho-beta-D-ribosyl)imidazole-4-carboxamido]succinate + ADP + phosphate + 2 H(+). Its pathway is purine metabolism; IMP biosynthesis via de novo pathway; 5-amino-1-(5-phospho-D-ribosyl)imidazole-4-carboxamide from 5-amino-1-(5-phospho-D-ribosyl)imidazole-4-carboxylate: step 1/2. The polypeptide is Phosphoribosylaminoimidazole-succinocarboxamide synthase (Klebsiella pneumoniae (strain 342)).